A 279-amino-acid polypeptide reads, in one-letter code: MKTTKTFKQMKRDGEPIAMLTAYDAPSARLAERAGVDMILVGDSLGMVVLGYDSTVPVSVDDMVLHTKAVKRGAPNTFVVTDMPFLTYHSSFSETAGHVRRLLQEAGADAVKLEGGTDIASTVQRLTAAGVPVVGHIGLTPQSVGVLGGYRVQGKAQEEGEQLLADAQALEQAGAFAIVVECVPKQLGALLAKEINVPIIGIGAGAETDGQVLVYHDVIGYESERVAKFVKQYTAVSPIIEEGLASYVTDVKQRAFPEEAHTYTTNDTGWLAVYGGDKK.

Mg(2+) contacts are provided by aspartate 43 and aspartate 82. Residues 43-44 (DS), aspartate 82, and lysine 112 each bind 3-methyl-2-oxobutanoate. Residue glutamate 114 participates in Mg(2+) binding. Catalysis depends on glutamate 181, which acts as the Proton acceptor.

This sequence belongs to the PanB family. Homodecamer; pentamer of dimers. Requires Mg(2+) as cofactor.

It localises to the cytoplasm. The enzyme catalyses 3-methyl-2-oxobutanoate + (6R)-5,10-methylene-5,6,7,8-tetrahydrofolate + H2O = 2-dehydropantoate + (6S)-5,6,7,8-tetrahydrofolate. It functions in the pathway cofactor biosynthesis; (R)-pantothenate biosynthesis; (R)-pantoate from 3-methyl-2-oxobutanoate: step 1/2. Catalyzes the reversible reaction in which hydroxymethyl group from 5,10-methylenetetrahydrofolate is transferred onto alpha-ketoisovalerate to form ketopantoate. The chain is 3-methyl-2-oxobutanoate hydroxymethyltransferase from Shouchella clausii (strain KSM-K16) (Alkalihalobacillus clausii).